The primary structure comprises 145 residues: Oleosin L (145 aa).

Alanine 2 is subject to N-acetylalanine. 2 helical membrane passes run 36–56 (GSLL…LTIA) and 59–79 (LLVI…LLGA). Positions 58–69 (PLLVIFSPVLVP) match the Proline-knot motif. The span at 123-132 (KAREMKDRAE) shows a compositional bias: basic and acidic residues. The interval 123–145 (KAREMKDRAEQFSQQPVAGSQTS) is disordered. A compositionally biased stretch (polar residues) spans 133–145 (QFSQQPVAGSQTS).

It belongs to the oleosin family. As to expression, expressed in seeds (at protein level).

The protein resides in the lipid droplet. It is found in the membrane. In terms of biological role, may have a structural role to stabilize the lipid body during desiccation of the seed by preventing coalescence of the oil. Probably interacts with both lipid and phospholipid moieties of lipid bodies. May also provide recognition signals for specific lipase anchorage in lipolysis during seedling growth. The chain is Oleosin L from Sesamum indicum (Oriental sesame).